Consider the following 352-residue polypeptide: C-X-C chemokine receptor type 4 (352 aa).

Residues Met1–Tyr21 are important for chemokine binding and signaling. The Extracellular segment spans residues Met1 to Arg38. Tyr7 carries the sulfotyrosine modification. A glycan (N-linked (GlcNAc...) asparagine) is linked at Asn11. Tyr12 carries the sulfotyrosine modification. An O-linked (Xyl...) (chondroitin sulfate) serine glycan is attached at Ser18. Position 21 is a sulfotyrosine (Tyr21). Disulfide bonds link Cys28–Cys274 and Cys109–Cys186. The helical transmembrane segment at Ile39–Met63 threads the bilayer. Residues Gly64–Arg77 lie on the Cytoplasmic side of the membrane. The chain crosses the membrane as a helical span at residues Leu78–Val99. The segment at Trp94–Asp97 is chemokine binding. Residues Ala100–Lys110 lie on the Extracellular side of the membrane. Residues Ala111 to Ile130 traverse the membrane as a helical segment. The segment at His113 to Thr117 is chemokine binding. Topologically, residues Ser131–Lys154 are cytoplasmic. The Important for signaling signature appears at Asp133–Tyr135. The segment at Tyr135 to Pro147 is involved in dimerization; when bound to chemokine. Residues Val155–Phe174 form a helical membrane-spanning segment. Residues Ala175–Trp195 lie on the Extracellular side of the membrane. The interval Cys186–Tyr190 is chemokine binding, important for signaling. The tract at residues Pro191–Leu210 is involved in dimerization. Residues Val196–Leu216 traverse the membrane as a helical segment. The Cytoplasmic segment spans residues Ser217–Thr241. A helical membrane pass occupies residues Val242–Ile261. The Extracellular segment spans residues Asp262–Lys282. An involved in dimerization region spans residues Leu266–Glu268. Residues Trp283–Tyr302 traverse the membrane as a helical segment. Residues Ala303–Ser352 are Cytoplasmic-facing. Phosphoserine occurs at positions 319 and 321. 2 positions are modified to phosphoserine; by PKC and GRK6: Ser324 and Ser325. Residues Leu329 to Ser352 are disordered. Phosphoserine; by GRK6 is present on Ser330. A Glycyl lysine isopeptide (Lys-Gly) (interchain with G-Cter in ubiquitin) cross-link involves residue Lys331. The segment covering His337 to Ser352 has biased composition (low complexity). Phosphoserine; by GRK6 is present on Ser339. Phosphoserine occurs at positions 348 and 351.

Belongs to the G-protein coupled receptor 1 family. In terms of assembly, monomer. Can form homodimers. Interacts with CD164. Interacts with ARRB2; the interaction is dependent on the C-terminal phosphorylation of CXCR4 and allows activation of MAPK1 and MAPK3. Interacts with ARR3; the interaction is dependent on the C-terminal phosphorylation of CXCR4 and modulates calcium mobilization. Interacts with RNF113A; the interaction, enhanced by CXCL12, promotes CXCR4 ubiquitination and subsequent degradation. Interacts (via the cytoplasmic C-terminal) with ITCH (via the WW domains I and II); the interaction, enhanced by CXCL12, promotes CXCR4 ubiquitination and leads to its degradation. Interacts with extracellular ubiquitin. Interacts with DBN1; this interaction is enhanced by antigenic stimulation. Following LPS binding, may form a complex with GDF5, HSP90AA1 and HSPA8. In terms of processing, phosphorylated on agonist stimulation. Rapidly phosphorylated on serine and threonine residues in the C-terminal. Phosphorylation at Ser-324 and Ser-325 leads to recruitment of ITCH, ubiquitination and protein degradation. Ubiquitinated after ligand binding, leading to its degradation. Ubiquitinated by ITCH at the cell membrane on agonist stimulation. The ubiquitin-dependent mechanism, endosomal sorting complex required for transport (ESCRT), then targets CXCR4 for lysosomal degradation. This process is dependent also on prior Ser-/Thr-phosphorylation in the C-terminal of CXCR4. Also binding of ARRB1 to STAM negatively regulates CXCR4 sorting to lysosomes though modulating ubiquitination of SFR5S. Post-translationally, sulfation is required for efficient binding of CXCL12/SDF-1alpha and promotes its dimerization. In terms of processing, O- and N-glycosylated. N-glycosylation can mask coreceptor function. The O-glycosylation chondroitin sulfate attachment does not affect interaction with CXCL12/SDF-1alpha nor its coreceptor activity.

Its subcellular location is the cell membrane. It is found in the cell junction. The protein localises to the early endosome. It localises to the late endosome. The protein resides in the lysosome. In terms of biological role, receptor for the C-X-C chemokine CXCL12/SDF-1 that transduces a signal by increasing intracellular calcium ion levels and enhancing MAPK1/MAPK3 activation. Involved in the AKT signaling cascade. Plays a role in regulation of cell migration, e.g. during wound healing. Acts as a receptor for extracellular ubiquitin; leading to enhanced intracellular calcium ions and reduced cellular cAMP levels. Binds bacterial lipopolysaccharide (LPS) et mediates LPS-induced inflammatory response, including TNF secretion by monocytes. Involved in hematopoiesis and in cardiac ventricular septum formation. Also plays an essential role in vascularization of the gastrointestinal tract, probably by regulating vascular branching and/or remodeling processes in endothelial cells. Involved in cerebellar development. In the CNS, could mediate hippocampal-neuron survival. In Papio anubis (Olive baboon), this protein is C-X-C chemokine receptor type 4 (CXCR4).